A 285-amino-acid chain; its full sequence is Pseudouridine-5'-phosphate glycosidase (285 aa).

Glu-17 acts as the Proton donor in catalysis. Lys-77 and Val-97 together coordinate substrate. Asp-126 lines the Mn(2+) pocket. Residue 128-130 coordinates substrate; that stretch reads SQD. Lys-147 serves as the catalytic Nucleophile.

It belongs to the pseudouridine-5'-phosphate glycosidase family. In terms of assembly, homotrimer. Requires Mn(2+) as cofactor.

It catalyses the reaction D-ribose 5-phosphate + uracil = psi-UMP + H2O. Its function is as follows. Catalyzes the reversible cleavage of pseudouridine 5'-phosphate (PsiMP) to ribose 5-phosphate and uracil. Functions biologically in the cleavage direction, as part of a pseudouridine degradation pathway. In Thermotoga sp. (strain RQ2), this protein is Pseudouridine-5'-phosphate glycosidase.